Here is a 297-residue protein sequence, read N- to C-terminus: Universal stress protein MT2698 (297 aa).

ATP is bound by residues Gly-13, Ala-43, 117 to 123, Arg-127, 131 to 132, Gly-165, Asp-198, 262 to 268, and 276 to 278; these read GCLGSGR, SV, GSRGRGG, and SVG.

The protein belongs to the universal stress protein A family. Homodimer.

Functionally, may play a role in the establishment of a persistent infection (latency) in the host. This Mycobacterium tuberculosis (strain CDC 1551 / Oshkosh) protein is Universal stress protein MT2698.